Consider the following 156-residue polypeptide: 6,7-dimethyl-8-ribityllumazine synthase (156 aa).

5-amino-6-(D-ribitylamino)uracil is bound by residues F23, 57–59 (AYE), and 81–83 (AII). Residue 86–87 (ST) coordinates (2S)-2-hydroxy-3-oxobutyl phosphate. The active-site Proton donor is H89. 5-amino-6-(D-ribitylamino)uracil is bound at residue F114. R128 lines the (2S)-2-hydroxy-3-oxobutyl phosphate pocket.

The protein belongs to the DMRL synthase family.

It carries out the reaction (2S)-2-hydroxy-3-oxobutyl phosphate + 5-amino-6-(D-ribitylamino)uracil = 6,7-dimethyl-8-(1-D-ribityl)lumazine + phosphate + 2 H2O + H(+). The protein operates within cofactor biosynthesis; riboflavin biosynthesis; riboflavin from 2-hydroxy-3-oxobutyl phosphate and 5-amino-6-(D-ribitylamino)uracil: step 1/2. Catalyzes the formation of 6,7-dimethyl-8-ribityllumazine by condensation of 5-amino-6-(D-ribitylamino)uracil with 3,4-dihydroxy-2-butanone 4-phosphate. This is the penultimate step in the biosynthesis of riboflavin. This Campylobacter hominis (strain ATCC BAA-381 / DSM 21671 / CCUG 45161 / LMG 19568 / NCTC 13146 / CH001A) protein is 6,7-dimethyl-8-ribityllumazine synthase.